Reading from the N-terminus, the 360-residue chain is DNA replication and repair protein RecF (360 aa).

33–40 (GENGSGKT) is an ATP binding site.

This sequence belongs to the RecF family.

The protein localises to the cytoplasm. In terms of biological role, the RecF protein is involved in DNA metabolism; it is required for DNA replication and normal SOS inducibility. RecF binds preferentially to single-stranded, linear DNA. It also seems to bind ATP. The sequence is that of DNA replication and repair protein RecF from Rickettsia africae (strain ESF-5).